Here is a 179-residue protein sequence, read N- to C-terminus: MARLKEIYRKEIAPKLKEELQLANVMEVPRVTKITLNMGLGEAVGDKKIIENAVADLEKITGQKPIVTYARKSIAGFKIREGWPIGVKVTLRSDRMYEFLDRLLSISLPRVRDFRGLNAKSFDGRGNYSMGVKEQIIFPEIDYDKIDALRGLDITLTTTARTDDEGRALLRAFKFPFRN.

This sequence belongs to the universal ribosomal protein uL5 family. In terms of assembly, part of the 50S ribosomal subunit; part of the 5S rRNA/L5/L18/L25 subcomplex. Contacts the 5S rRNA and the P site tRNA. Forms a bridge to the 30S subunit in the 70S ribosome.

Its function is as follows. This is one of the proteins that bind and probably mediate the attachment of the 5S RNA into the large ribosomal subunit, where it forms part of the central protuberance. In the 70S ribosome it contacts protein S13 of the 30S subunit (bridge B1b), connecting the 2 subunits; this bridge is implicated in subunit movement. Contacts the P site tRNA; the 5S rRNA and some of its associated proteins might help stabilize positioning of ribosome-bound tRNAs. The polypeptide is Large ribosomal subunit protein uL5 (Pseudomonas paraeruginosa (strain DSM 24068 / PA7) (Pseudomonas aeruginosa (strain PA7))).